The chain runs to 240 residues: Putative glycyl-radical enzyme activating enzyme MJ1227 (240 aa).

Residues 14–232 (IDYPKKASAV…KKYIDNVVIR (219 aa)) form the Radical SAM core domain. Residues Cys29, Cys33, and Cys36 each contribute to the [4Fe-4S] cluster site. Residues 35-37 (YCH), Gly71, and 126-128 (FDK) contribute to the S-adenosyl-L-methionine site.

It belongs to the organic radical-activating enzymes family. [4Fe-4S] cluster is required as a cofactor.

It carries out the reaction glycyl-[protein] + reduced [flavodoxin] + S-adenosyl-L-methionine = glycin-2-yl radical-[protein] + semiquinone [flavodoxin] + 5'-deoxyadenosine + L-methionine + H(+). In Methanocaldococcus jannaschii (strain ATCC 43067 / DSM 2661 / JAL-1 / JCM 10045 / NBRC 100440) (Methanococcus jannaschii), this protein is Putative glycyl-radical enzyme activating enzyme MJ1227.